The primary structure comprises 216 residues: Probable nicotinate-nucleotide adenylyltransferase (216 aa).

The protein belongs to the NadD family.

It catalyses the reaction nicotinate beta-D-ribonucleotide + ATP + H(+) = deamido-NAD(+) + diphosphate. The protein operates within cofactor biosynthesis; NAD(+) biosynthesis; deamido-NAD(+) from nicotinate D-ribonucleotide: step 1/1. In terms of biological role, catalyzes the reversible adenylation of nicotinate mononucleotide (NaMN) to nicotinic acid adenine dinucleotide (NaAD). The sequence is that of Probable nicotinate-nucleotide adenylyltransferase from Shewanella pealeana (strain ATCC 700345 / ANG-SQ1).